The chain runs to 533 residues: Fimbrial subunit type 1 (533 aa).

Residues methionine 1–alanine 30 form the signal peptide. Positions leucine 496–glycine 500 match the LPXTG sorting signal motif. Threonine 499 is subject to Pentaglycyl murein peptidoglycan amidated threonine. A propeptide spans glycine 500 to histidine 533 (removed by sortase).

It localises to the secreted. It is found in the cell wall. The protein resides in the fimbrium. In terms of biological role, major fimbrial subunit of A.viscosus. The chain is Fimbrial subunit type 1 from Actinomyces viscosus.